The following is a 312-amino-acid chain: NAD(P)(+)--arginine ADP-ribosyltransferase 2 (312 aa).

The first 20 residues, 1–20 (MELLALRWVLLAGTLLSTSA), serve as a signal peptide directing secretion. Residues 21-31 (ASSALQEGDLG) constitute a propeptide that is removed on maturation. Intrachain disulfides connect cysteine 51/cysteine 260 and cysteine 159/cysteine 208. The region spanning 71 to 256 (YAYAVGWRKA…IYLRSKGKMS (186 aa)) is the TR mART core domain. 3 residues coordinate NAD(+): tyrosine 108, arginine 164, and glutamine 183. Arginine 164 is an active-site residue. The active site involves serine 186. NAD(+) is bound at residue serine 217. Glutamate 224 is a catalytic residue. Positions 267 to 312 (GGQWGRGHQEVGLGLSPGLALPVLPCSNCSCWGSGHRAGDPIPAAV) are excised as a propeptide.

Belongs to the Arg-specific ADP-ribosyltransferase family.

Its subcellular location is the secreted. It is found in the extracellular space. The enzyme catalyses L-arginyl-[protein] + NAD(+) = N(omega)-(ADP-D-ribosyl)-L-arginyl-[protein] + nicotinamide + H(+). The sequence is that of NAD(P)(+)--arginine ADP-ribosyltransferase 2 from Gallus gallus (Chicken).